The following is a 440-amino-acid chain: uncharacterized protein (440 aa).

The signal sequence occupies residues 1–29 (MLRLQMMEGLIVKRTLLLILLLVISVSYA).

Belongs to the Mj S-layer protein family.

This is an uncharacterized protein from Methanocaldococcus jannaschii (strain ATCC 43067 / DSM 2661 / JAL-1 / JCM 10045 / NBRC 100440) (Methanococcus jannaschii).